A 229-amino-acid chain; its full sequence is Potassium/proton antiporter CemA (229 aa).

The next 4 membrane-spanning stretches (helical) occupy residues 7 to 27 (FTPL…SLSF), 114 to 134 (LICF…LLIL), 154 to 174 (ILLL…ELMI), and 189 to 209 (IISG…KYWI).

Belongs to the CemA family.

It localises to the plastid. The protein localises to the chloroplast inner membrane. It catalyses the reaction K(+)(in) + H(+)(out) = K(+)(out) + H(+)(in). Functionally, contributes to K(+)/H(+) antiport activity by supporting proton efflux to control proton extrusion and homeostasis in chloroplasts in a light-dependent manner to modulate photosynthesis. Prevents excessive induction of non-photochemical quenching (NPQ) under continuous-light conditions. Indirectly promotes efficient inorganic carbon uptake into chloroplasts. The sequence is that of Potassium/proton antiporter CemA from Gossypium hirsutum (Upland cotton).